The primary structure comprises 1243 residues: MATLKQIQFKRSKIAGTRPAASVLAEGELAINLKDSTIFTKDDSGNIIDLSISAGGNISGNVTIDGTLRVNGPINNFGNFSTSGQITAGSSISAQVFRALQGSFYSRASTGETANAHLWFENADGTERGVIYARPQTTTDGEIRLRVRQGTGSTTNSEFYFRSINGGEFQANRILASDSLVTKRIAVDTVIHDAKAFGQYDSHSLVNYVYPGTGETNGVNYLRKVRAKAAGTMWHEICTAQTGQADEMSWWTGNTPQSKQYGIRNDGRIAGRNSLALGTFTTNFPSSDYGNVGVMGDKYLVLGDTVTGLSYKKTGVFDLVGGGYSVASITPDSFRSTRKGIFGRSEDQGATWIMPGTNAALLSVQTQADTNNAGDGQTHIGYNAGGKMNHYFRGTGQMNINTQQGMEINPGILKLVTGSNNVQFYADGNISSIQPVKLDNELFLNSSNNTAGLKFGAPSKVDGTRAIQWNGGTREGQNKNYVIIKAWGNSFNATGDRSRETVFQVSDSQGYYFYAHRKAPTGDETIGRIEAQFAGELNAKSINAVENFKVNGLSTLVGGVTMSNGLNLTGGSSITGQVKIGGTYDALRIWNSRYGAIFRRSETSLHIIPTNENEGENGAINNLRPFSIELGTGTVSMLHDVHLGNSGSSTGLLQVSNSLKTIKMICPVTINERNAALTLDSPSSSSANYLQGSKAGTKSWYVGLGGAGNDLSLYSQSYGHGLVISDNFVSISKPLKVGNAQLGTDGNITGGSGNFANLNTTLNRKVNSGFITYGATSGWYKFATVTMPQSTSTAFFKIVGGSGFNSGLFTQCNIAEIVLRTGNERPADLNAVLYTRTIGAAFKNIAVNNVSGDTYDIYVYAGTYCNQLACEWACTENATISVIGINSSTQSPVDDLPDTAVNGQVANVLNNLVDSGKGKRYEAESEIAINSQTGIRIRSNADKTGSVATMLRNDGGSFYILFTDKNDTDGAATVNGEWNSKRPFAINLTTGEVMMNNGIAVRSAALFYNSINVKDNGSINFDKSGANPRNMRIFHAGDASRGNRIEIADETNYIAYFEKAPGGANRFVVNNATVSGVNQMNSFGVNTSNALGGNSITFGDTDTGIKQNGDGLLDIYANNAQVFRFQNGDLYSYKNINAPNVYIRSDIRLKSNFKPIENALDKVEKLNGVIYDKAEYIGGEAIETEAGIVAQTLQDVLPEAVRETEDSKGNKILTVSSQAQIALLVEAVKTLSARVKELESKLM.

Positions 1140–1143 are interaction with the receptor-recognizing protein gp38; it reads NVYI. The Peptidase S74 domain occupies 1145–1242; it reads SDIRLKSNFK…ARVKELESKL (98 aa).

It belongs to the S16-like long tail fiber protein Gp37 family. As to quaternary structure, homotrimer. Interacts with the receptor-recognizing protein Gp38. In terms of processing, proteolytic cleavage and release of the chaperone in the host cytosol stabilizes the folded protein.

The protein localises to the virion. Functionally, constitues the trimeric tip of the long tail fiber that mediates the attachment to the host receptor, together with the receptor-recognizing protein Gp38. The C-terminal chaperone protein mediates homotrimerization and proper folding of the catalytic trimer. In Enterobacteria phage K3 (Bacteriophage K3), this protein is Long tail fiber protein Gp37 (37).